A 250-amino-acid polypeptide reads, in one-letter code: Large ribosomal subunit protein uL13c (250 aa).

Residues 1 to 47 constitute a chloroplast transit peptide; that stretch reads MATMACASSLTFPSAQTQKSFFGTNVKQTPVLSFPRPTVAAAVAVSA.

Component of the chloroplast large ribosomal subunit (LSU). Mature 70S chloroplast ribosomes of higher plants consist of a small (30S) and a large (50S) subunit. The 30S small subunit contains 1 molecule of ribosomal RNA (16S rRNA) and 24 different proteins. The 50S large subunit contains 3 rRNA molecules (23S, 5S and 4.5S rRNA) and 33 different proteins.

It is found in the plastid. Its subcellular location is the chloroplast. Functionally, component of the chloroplast ribosome (chloro-ribosome), a dedicated translation machinery responsible for the synthesis of chloroplast genome-encoded proteins, including proteins of the transcription and translation machinery and components of the photosynthetic apparatus. The chain is Large ribosomal subunit protein uL13c (RPL13) from Spinacia oleracea (Spinach).